A 194-amino-acid polypeptide reads, in one-letter code: CASP-like protein Ni6 (194 aa).

Topologically, residues 1–27 (MSSMETEKGAVPTPQAPPVAPTDNKYR) are cytoplasmic. The chain crosses the membrane as a helical span at residues 28–48 (VVDVILRVLLLAASIASVVLM). The Extracellular portion of the chain corresponds to 49–75 (VTSKQTEIIVSPFGSRPNAAKFQNSPA). Residues 76 to 96 (FIYLVAALSVAGLYSIITALV) traverse the membrane as a helical segment. Residues 97–109 (SLSYMRKPIVPPK) are Cytoplasmic-facing. Residues 110-130 (LFWILLIHDVLLLGIVAAATG) traverse the membrane as a helical segment. Over 131–161 (TAGGVGYIGLKGNTHVRWGKIRNVYDKFCRH) the chain is Extracellular. A helical transmembrane segment spans residues 162–182 (VGASIIVSLFAAAVLVLLVFV). Residues 183 to 194 (NANSLYRRIPKY) lie on the Cytoplasmic side of the membrane.

The protein belongs to the Casparian strip membrane proteins (CASP) family. As to quaternary structure, homodimer and heterodimers.

The protein resides in the cell membrane. The polypeptide is CASP-like protein Ni6 (Ni6) (Beta vulgaris subsp. maritima (Sea beet)).